Consider the following 76-residue polypeptide: uncharacterized protein (76 aa).

This sequence to M.jannaschii MJ0857 N-terminal region.

This is an uncharacterized protein from Methanocaldococcus jannaschii (strain ATCC 43067 / DSM 2661 / JAL-1 / JCM 10045 / NBRC 100440) (Methanococcus jannaschii).